Here is a 353-residue protein sequence, read N- to C-terminus: Methylthioribose-1-phosphate isomerase (353 aa).

Residues 51-53 (RGA), R94, and Q199 each bind substrate. D240 acts as the Proton donor in catalysis. 250-251 (NK) provides a ligand contact to substrate.

This sequence belongs to the eIF-2B alpha/beta/delta subunits family. MtnA subfamily. Homodimer.

It catalyses the reaction 5-(methylsulfanyl)-alpha-D-ribose 1-phosphate = 5-(methylsulfanyl)-D-ribulose 1-phosphate. It participates in amino-acid biosynthesis; L-methionine biosynthesis via salvage pathway; L-methionine from S-methyl-5-thio-alpha-D-ribose 1-phosphate: step 1/6. In terms of biological role, catalyzes the interconversion of methylthioribose-1-phosphate (MTR-1-P) into methylthioribulose-1-phosphate (MTRu-1-P). In Bacillus pumilus (strain SAFR-032), this protein is Methylthioribose-1-phosphate isomerase.